A 326-amino-acid polypeptide reads, in one-letter code: MSPRQLNFLSAFSLSVAIAVVYHQAWGIAVAQPILPSEAVETGVISNGISINLFQAFVLGFIQGATEFLPISSTAHLKAVPMALGWGDPGVAFTAVIQLGSIGAVFWYFWEDLTGIAKGIIKAVQTRQYDSLEFKLGLGIGLGTIPIVFFGLLMKLLVQDLDNSFFRSLSTIAIASIVMALLLALAEKLGTHRRPFEKLRWQDGLIMGTAQALALIPGVSRSGSTLTAGLFINLERAAAARFSFLLGIPAITIAGLVELKGLLDKNLSNDAILPLIVGTISSAVFSYLAIAWLIKFLQKRSTWIFVWYRLIFGVVILTALGMGFGT.

9 helical membrane passes run 11–31 (AFSL…IAVA), 42–62 (TGVI…LGFI), 90–110 (GVAF…WYFW), 138–158 (LGIG…KLLV), 165–185 (FFRS…LLAL), 212–232 (ALAL…GLFI), 242–262 (FSFL…LKGL), 272–292 (ILPL…AIAW), and 304–324 (IFVW…GMGF).

This sequence belongs to the UppP family.

It is found in the cell inner membrane. It carries out the reaction di-trans,octa-cis-undecaprenyl diphosphate + H2O = di-trans,octa-cis-undecaprenyl phosphate + phosphate + H(+). Functionally, catalyzes the dephosphorylation of undecaprenyl diphosphate (UPP). Confers resistance to bacitracin. In Synechocystis sp. (strain ATCC 27184 / PCC 6803 / Kazusa), this protein is Undecaprenyl-diphosphatase.